The primary structure comprises 212 residues: MNSKFIVIEGLEGAGKTSAMKTIVEMLQQHGIQNLIFTREPGGTPLAEKLRGLIKQGVEGEPLTDKAEVLMLYAARVQLVENVIKPALARGTWVVGDRHDLSSQAYQGGGRGIDKNLMTSLRDTVLGDFRPDLTIYLDLPPQIGLLRARERGELDRIEKESMDFFDRTRSRYLEFAAQDKSIVTVDAAQPIEQVQADIYQVLEQWLKQQENG.

Residue 10-17 (GLEGAGKT) participates in ATP binding.

This sequence belongs to the thymidylate kinase family.

The catalysed reaction is dTMP + ATP = dTDP + ADP. Phosphorylation of dTMP to form dTDP in both de novo and salvage pathways of dTTP synthesis. The sequence is that of Thymidylate kinase from Photorhabdus laumondii subsp. laumondii (strain DSM 15139 / CIP 105565 / TT01) (Photorhabdus luminescens subsp. laumondii).